The following is a 237-amino-acid chain: Phosphoribosylaminoimidazole-succinocarboxamide synthase (237 aa).

This sequence belongs to the SAICAR synthetase family.

The catalysed reaction is 5-amino-1-(5-phospho-D-ribosyl)imidazole-4-carboxylate + L-aspartate + ATP = (2S)-2-[5-amino-1-(5-phospho-beta-D-ribosyl)imidazole-4-carboxamido]succinate + ADP + phosphate + 2 H(+). It participates in purine metabolism; IMP biosynthesis via de novo pathway; 5-amino-1-(5-phospho-D-ribosyl)imidazole-4-carboxamide from 5-amino-1-(5-phospho-D-ribosyl)imidazole-4-carboxylate: step 1/2. This Pectobacterium atrosepticum (strain SCRI 1043 / ATCC BAA-672) (Erwinia carotovora subsp. atroseptica) protein is Phosphoribosylaminoimidazole-succinocarboxamide synthase.